Here is an 846-residue protein sequence, read N- to C-terminus: Translation initiation factor IF-2 (846 aa).

The segment at Tyr198 to Lys219 is disordered. Residues Ser207 to Lys219 are compositionally biased toward basic residues. One can recognise a tr-type G domain in the interval Ser345 to Glu512. Residues Gly354–Thr361 are G1. Gly354 to Thr361 provides a ligand contact to GTP. A G2 region spans residues Gly379–His383. Positions Asp400–Gly403 are G3. GTP is bound by residues Asp400 to His404 and Asn454 to Asp457. The tract at residues Asn454–Asp457 is G4. A G5 region spans residues Ser490–Lys492.

The protein belongs to the TRAFAC class translation factor GTPase superfamily. Classic translation factor GTPase family. IF-2 subfamily.

The protein localises to the cytoplasm. Functionally, one of the essential components for the initiation of protein synthesis. Protects formylmethionyl-tRNA from spontaneous hydrolysis and promotes its binding to the 30S ribosomal subunits. Also involved in the hydrolysis of GTP during the formation of the 70S ribosomal complex. The polypeptide is Translation initiation factor IF-2 (Francisella tularensis subsp. tularensis (strain SCHU S4 / Schu 4)).